We begin with the raw amino-acid sequence, 177 residues long: Alkyl hydroperoxide reductase AhpD (177 aa).

Cys-130 acts as the Proton donor in catalysis. The cysteines at positions 130 and 133 are disulfide-linked. Cys-133 functions as the Cysteine sulfenic acid (-SOH) intermediate in the catalytic mechanism.

The protein belongs to the AhpD family. In terms of assembly, homotrimer.

The enzyme catalyses N(6)-[(R)-dihydrolipoyl]-L-lysyl-[lipoyl-carrier protein] + a hydroperoxide = N(6)-[(R)-lipoyl]-L-lysyl-[lipoyl-carrier protein] + an alcohol + H2O. Functionally, antioxidant protein with alkyl hydroperoxidase activity. Required for the reduction of the AhpC active site cysteine residues and for the regeneration of the AhpC enzyme activity. The sequence is that of Alkyl hydroperoxide reductase AhpD from Mycobacterium bovis (strain ATCC BAA-935 / AF2122/97).